A 187-amino-acid polypeptide reads, in one-letter code: UPF0301 protein YqgE (187 aa).

Belongs to the UPF0301 (AlgH) family.

The sequence is that of UPF0301 protein YqgE from Escherichia coli O139:H28 (strain E24377A / ETEC).